We begin with the raw amino-acid sequence, 401 residues long: G2/mitotic-specific cyclin-B1 (401 aa).

Disordered regions lie at residues 1–30 (MALR…PTLK) and 84–103 (KVQV…ETSG). Positions 9-26 (RLASTRAEQGGKTCSVSG) are enriched in polar residues.

Belongs to the cyclin family. Cyclin AB subfamily. In terms of assembly, interacts with the CDK1 protein kinase to form a serine/threonine kinase holoenzyme complex also known as maturation promoting factor (MPF). The cyclin subunit imparts substrate specificity to the complex.

Its function is as follows. Essential for the control of the cell cycle at the G2/M (mitosis) transition. In Oryzias javanicus (Javanese ricefish), this protein is G2/mitotic-specific cyclin-B1 (ccnb1).